A 777-amino-acid polypeptide reads, in one-letter code: Subtilisin-like protease SBT1.4 (777 aa).

Residues 1–25 form the signal peptide; the sequence is MAKLSLSSIFFVFPLLLCFFSPSSS. Residues 26–110 constitute a propeptide, activation peptide; sequence SSDGLESYIV…VIPDQAREIH (85 aa). The Inhibitor I9 domain maps to 32–110; sequence SYIVHVQRSH…VIPDQAREIH (79 aa). Positions 115 to 614 constitute a Peptidase S8 domain; that stretch reads PAFLGFSQNS…AGHVDPNKAL (500 aa). Catalysis depends on Asp142, which acts as the Charge relay system. Asn198 is a glycosylation site (N-linked (GlcNAc...) asparagine). Residues 199–223 are disordered; that stretch reads GTKKHAAKESRSPRDTEGHGTHTAS. The span at 205-218 shows a compositional bias: basic and acidic residues; it reads AKESRSPRDTEGHG. The active-site Charge relay system is His217. N-linked (GlcNAc...) asparagine glycosylation is found at Asn232 and Asn395. The PA domain maps to 376-461; it reads LSLVYSGDCG…VGAKAGDQIR (86 aa). The Charge relay system role is filled by Ser546.

This sequence belongs to the peptidase S8 family.

It localises to the secreted. The polypeptide is Subtilisin-like protease SBT1.4 (Arabidopsis thaliana (Mouse-ear cress)).